Consider the following 477-residue polypeptide: 3-isopropylmalate dehydratase large subunit 1 (477 aa).

Positions 357, 417, and 420 each coordinate [4Fe-4S] cluster.

The protein belongs to the aconitase/IPM isomerase family. LeuC type 1 subfamily. Heterodimer of LeuC and LeuD. [4Fe-4S] cluster is required as a cofactor.

It catalyses the reaction (2R,3S)-3-isopropylmalate = (2S)-2-isopropylmalate. It functions in the pathway amino-acid biosynthesis; L-leucine biosynthesis; L-leucine from 3-methyl-2-oxobutanoate: step 2/4. Its function is as follows. Catalyzes the isomerization between 2-isopropylmalate and 3-isopropylmalate, via the formation of 2-isopropylmaleate. This chain is 3-isopropylmalate dehydratase large subunit 1, found in Bradyrhizobium diazoefficiens (strain JCM 10833 / BCRC 13528 / IAM 13628 / NBRC 14792 / USDA 110).